We begin with the raw amino-acid sequence, 120 residues long: Ribonuclease P protein component (120 aa).

The protein belongs to the RnpA family. In terms of assembly, consists of a catalytic RNA component (M1 or rnpB) and a protein subunit.

It carries out the reaction Endonucleolytic cleavage of RNA, removing 5'-extranucleotides from tRNA precursor.. RNaseP catalyzes the removal of the 5'-leader sequence from pre-tRNA to produce the mature 5'-terminus. It can also cleave other RNA substrates such as 4.5S RNA. The protein component plays an auxiliary but essential role in vivo by binding to the 5'-leader sequence and broadening the substrate specificity of the ribozyme. The sequence is that of Ribonuclease P protein component from Azoarcus sp. (strain BH72).